A 155-amino-acid chain; its full sequence is Small ribosomal subunit protein bS6 (155 aa).

The interval 94-155 is disordered; it reads EKHEEGPSAM…RPRRPREDRV (62 aa).

It belongs to the bacterial ribosomal protein bS6 family.

In terms of biological role, binds together with bS18 to 16S ribosomal RNA. This Rhizobium johnstonii (strain DSM 114642 / LMG 32736 / 3841) (Rhizobium leguminosarum bv. viciae) protein is Small ribosomal subunit protein bS6.